Reading from the N-terminus, the 276-residue chain is MSKGPGLFTDIGKKAKDLLTRDYNSDQKFSISTYSASGVALTSTALKKGGVHAADVATQYKYKNALFDVKIDTDSSVLTTVTLTEILPSTKAIASFKVPDYNSAKLEVQYFHDHATVTAAAALKQNPLIDITATLGSPVISFGAEAGYDTTSKTFTKYNAGISVTKPDACLSIILGDKGDSLKASYLHHFDEFKRTAAVGEVYRKFSTNENTITVGGLYAIDHSTAVKAKLNNHGTLGALLQHEVLPRSLVTVSSEIDTKALEKHPRFGLSLALKP.

Serine 76 bears the Phosphoserine mark. Threonine 236 bears the Phosphothreonine mark.

Belongs to the eukaryotic mitochondrial porin (TC 1.B.8.1) family. As to expression, expressed in root tips, steles, leaves, sepals, petals, stamen and pistils.

It is found in the mitochondrion outer membrane. Forms a channel through the mitochondrial outer membrane that allows diffusion of small hydrophilic molecules. The channel adopts an open conformation at low or zero membrane potential and a closed conformation at potentials above 30-40 mV. The open state has a weak anion selectivity whereas the closed state is cation-selective. Involved in plant growth and development at the vegetative and reproductive stages. Is important for leaf and pollen development and mitochondrial membrane potential steady state. May be involved in ABA-mediated early seedling development and disease resistance. This chain is Mitochondrial outer membrane protein porin 2 (VDAC2), found in Arabidopsis thaliana (Mouse-ear cress).